The primary structure comprises 98 residues: Cytochrome c oxidase assembly protein COX19 (98 aa).

The segment covering 1-10 (MSGNPGSSLS) has biased composition (polar residues). The disordered stretch occupies residues 1-25 (MSGNPGSSLSALRPTPPERGSFPLD). Residues 27–70 (DGECTKYMQEYLKCMQLVQNENAMNCRLLAKDYLRCRMDHQLMD) form the CHCH domain. 2 short sequence motifs (cx9C motif) span residues 30–40 (CTKYMQEYLKC) and 52–62 (CRLLAKDYLRC). Intrachain disulfides connect Cys-30/Cys-62 and Cys-40/Cys-52. The interval 76–98 (HLGLPEDAPGNNGKTIKDATDNK) is disordered.

It belongs to the COX19 family.

The protein resides in the cytoplasm. It localises to the mitochondrion intermembrane space. In terms of biological role, required for the assembly of mitochondrial cytochrome c oxidase. The polypeptide is Cytochrome c oxidase assembly protein COX19 (COX19) (Saccharomyces cerevisiae (strain ATCC 204508 / S288c) (Baker's yeast)).